A 187-amino-acid chain; its full sequence is Transmembrane protein 272 (187 aa).

Transmembrane regions (helical) follow at residues 21 to 41 (CFVV…FIGM), 52 to 72 (LIPL…SLLL), 107 to 127 (IHLL…YWVF), and 149 to 169 (LYLF…LLLL).

Its subcellular location is the membrane. In Homo sapiens (Human), this protein is Transmembrane protein 272.